Consider the following 610-residue polypeptide: UvrABC system protein C (610 aa).

The GIY-YIG domain occupies Ser-16–Val-94. Positions Gln-204–Val-239 constitute a UVR domain.

It belongs to the UvrC family. Interacts with UvrB in an incision complex.

It localises to the cytoplasm. Functionally, the UvrABC repair system catalyzes the recognition and processing of DNA lesions. UvrC both incises the 5' and 3' sides of the lesion. The N-terminal half is responsible for the 3' incision and the C-terminal half is responsible for the 5' incision. The sequence is that of UvrABC system protein C from Yersinia enterocolitica serotype O:8 / biotype 1B (strain NCTC 13174 / 8081).